Here is a 683-residue protein sequence, read N- to C-terminus: ATP-dependent zinc metalloprotease FtsH (683 aa).

Residues 1 to 43 are disordered; that stretch reads MEDKNIKDDEILDDQNDNQEDVQNQDEEKEIKPKKPKKKVYIS. The Cytoplasmic segment spans residues 1 to 70; the sequence is MEDKNIKDDE…KNNNISFRVK (70 aa). Over residues 10-28 the composition is skewed to acidic residues; that stretch reads EILDDQNDNQEDVQNQDEE. Residues 71–91 traverse the membrane as a helical segment; it reads PPIFFFLILILMSTLFYFYGN. Residues 92-174 lie on the Periplasmic side of the membrane; that stretch reads KTALFQEKRE…IVVLGTPVSS (83 aa). The helical transmembrane segment at 175 to 195 threads the bilayer; the sequence is IITRAIFSFAPLFMLLFFFYF. Topologically, residues 196–683 are cytoplasmic; it reads INKKMMGSSG…LDDEQLEKYY (488 aa). 270 to 277 contributes to the ATP binding site; the sequence is GEPGTGKT. H494 lines the Zn(2+) pocket. The active site involves E495. The Zn(2+) site is built by H498 and D569.

This sequence in the central section; belongs to the AAA ATPase family. It in the C-terminal section; belongs to the peptidase M41 family. Homohexamer. Zn(2+) serves as cofactor.

It is found in the cell inner membrane. In terms of biological role, acts as a processive, ATP-dependent zinc metallopeptidase for both cytoplasmic and membrane proteins. Plays a role in the quality control of integral membrane proteins. This Streptobacillus moniliformis (strain ATCC 14647 / DSM 12112 / NCTC 10651 / 9901) protein is ATP-dependent zinc metalloprotease FtsH.